The following is a 151-amino-acid chain: UPF0756 membrane protein Aflv_0503 (151 aa).

The next 4 membrane-spanning stretches (helical) occupy residues 4–24 (FIFL…SLII), 52–72 (LGVT…KIGF), 85–105 (WIAM…VALL), and 115–135 (LVLG…GPLI).

It belongs to the UPF0756 family.

The protein resides in the cell membrane. The chain is UPF0756 membrane protein Aflv_0503 from Anoxybacillus flavithermus (strain DSM 21510 / WK1).